A 121-amino-acid polypeptide reads, in one-letter code: Small ribosomal subunit protein uS13 (121 aa).

Positions 92-121 (HRMGLPCRGQKTKTNARTRKGPRRGAARRK) are disordered. Basic residues predominate over residues 101–121 (QKTKTNARTRKGPRRGAARRK).

Belongs to the universal ribosomal protein uS13 family. In terms of assembly, part of the 30S ribosomal subunit. Forms a loose heterodimer with protein S19. Forms two bridges to the 50S subunit in the 70S ribosome.

In terms of biological role, located at the top of the head of the 30S subunit, it contacts several helices of the 16S rRNA. In the 70S ribosome it contacts the 23S rRNA (bridge B1a) and protein L5 of the 50S subunit (bridge B1b), connecting the 2 subunits; these bridges are implicated in subunit movement. Contacts the tRNAs in the A and P-sites. In Desulfotalea psychrophila (strain LSv54 / DSM 12343), this protein is Small ribosomal subunit protein uS13.